The chain runs to 292 residues: Shikimate dehydrogenase (NADP(+)) (292 aa).

Residues Ser22–Ser24 and Ser69 contribute to the shikimate site. The Proton acceptor role is filled by Lys73. Shikimate-binding residues include Asn94 and Asp111. Residues Gly135–Ala139 and Ile236 each bind NADP(+). Residue Tyr238 participates in shikimate binding. Gly260 provides a ligand contact to NADP(+).

This sequence belongs to the shikimate dehydrogenase family. As to quaternary structure, homodimer.

It carries out the reaction shikimate + NADP(+) = 3-dehydroshikimate + NADPH + H(+). The protein operates within metabolic intermediate biosynthesis; chorismate biosynthesis; chorismate from D-erythrose 4-phosphate and phosphoenolpyruvate: step 4/7. Its function is as follows. Involved in the biosynthesis of the chorismate, which leads to the biosynthesis of aromatic amino acids. Catalyzes the reversible NADPH linked reduction of 3-dehydroshikimate (DHSA) to yield shikimate (SA). This chain is Shikimate dehydrogenase (NADP(+)), found in Streptococcus pyogenes serotype M2 (strain MGAS10270).